Here is a 126-residue protein sequence, read N- to C-terminus: Prefoldin subunit beta (126 aa).

Belongs to the prefoldin subunit beta family. Heterohexamer of two alpha and four beta subunits.

The protein localises to the cytoplasm. Its function is as follows. Molecular chaperone capable of stabilizing a range of proteins. Seems to fulfill an ATP-independent, HSP70-like function in archaeal de novo protein folding. The polypeptide is Prefoldin subunit beta (Saccharolobus islandicus (strain Y.N.15.51 / Yellowstone #2) (Sulfolobus islandicus)).